A 389-amino-acid polypeptide reads, in one-letter code: 26S proteasome regulatory subunit 6B homolog (389 aa).

Position 175-182 (175-182) interacts with ATP; the sequence is GPPGTGKT.

This sequence belongs to the AAA ATPase family.

Its subcellular location is the cytoplasm. The protein resides in the nucleus. In terms of biological role, the 26S proteasome is involved in the ATP-dependent degradation of ubiquitinated proteins. The regulatory (or ATPase) complex confers ATP dependency and substrate specificity to the 26S complex. This chain is 26S proteasome regulatory subunit 6B homolog (rpt3), found in Schizosaccharomyces pombe (strain 972 / ATCC 24843) (Fission yeast).